The sequence spans 539 residues: Glutamate/serine transporter AimA (539 aa).

13 consecutive transmembrane segments (helical) span residues 11–31 (FSLMMVGLGSMIGSGWLFGAW), 36–56 (IAGPAAIISWVIGMVVILFIA), 82–102 (SFIGFIAGWANWIAIVSVIPV), 137–157 (AFASVLLLIYFLLNYWTVNLF), 164–184 (ITIFKIIIPGLTIGALLFVGF), 199–219 (GWASVLTAVATSGIVFAFNGF), 238–258 (IAVVGSLFVATVIYVLLQIAF), 283–303 (LAIALNINWLVIVLYADAFVS), 350–370 (LIVSFIFLFLFRGWGVLAEII), 401–421 (LKGLNVIAPLGFIFASLVLYW), 424–444 (WPLTGQVLFIILIGLPIYFYY), 457–477 (FKAGVWMVFYLLAMMVISYLG), and 486–506 (VIHYGWDMVLIAMVSLVFYVW).

The protein belongs to the amino acid-polyamine-organocation (APC) superfamily. AGT (TC 2.A.3.11) family.

The protein localises to the cell membrane. In terms of biological role, major glutamate and serine transporter. Cannot transport threonine. AimA is the major glutamate transporter under standard growth conditions when glutamate is not limiting in the medium. In Bacillus subtilis (strain 168), this protein is Glutamate/serine transporter AimA.